A 183-amino-acid polypeptide reads, in one-letter code: Photosystem I assembly protein Ycf4 (183 aa).

The next 2 helical transmembrane spans lie at 21–43 (YIWG…SSYL) and 63–85 (LVMC…LILW).

Belongs to the Ycf4 family.

It is found in the plastid. The protein localises to the chloroplast thylakoid membrane. Seems to be required for the assembly of the photosystem I complex. This Chlorella vulgaris (Green alga) protein is Photosystem I assembly protein Ycf4.